We begin with the raw amino-acid sequence, 128 residues long: KRAB domain-containing protein 1 (128 aa).

A KRAB domain is found at 15–86; that stretch reads VAFEDVAVYF…QPQGVLSRND (72 aa).

The polypeptide is KRAB domain-containing protein 1 (KRBOX1) (Homo sapiens (Human)).